The chain runs to 228 residues: Vesicle transport protein SEC20 (228 aa).

Residues 1–199 (MAAPQDVHVR…LITKYNRREL (199 aa)) lie on the Cytoplasmic side of the membrane. Residues 37 to 90 (LSELTELNTKVKEKFQQLKHRIQELEQSAKEQDKESEKQLLLQEVENHKKQMLS) adopt a coiled-coil conformation. The helical; Anchor for type IV membrane protein transmembrane segment at 200 to 220 (TDKLLIFLALALFLATVLYIV) threads the bilayer. Residues 221–228 (KKRLFPFL) lie on the Lumenal side of the membrane.

Belongs to the SEC20 family. Component of a SNARE complex consisting of STX18, USE1L, BNIP1/SEC20L and SEC22B. Interacts directly with STX18, RINT1/TIP20L and NAPA. Interacts with ZW10 through RINT1. Interacts with BCL2. Interacts with RNF186. Interacts with RNF185. Interacts with SQSTM1; increased by 'Lys-63'-linked polyubiquitination of BNIP1. Polyubiquitinated. 'Lys-63'-linked polyubiquitination by RNF185 increases the interaction with the autophagy receptor SQSTM1. Undergoes 'Lys-29'- and 'Lys-63'-linked polyubiquitination by RNF186 that may regulate BNIP1 localization to the mitochondrion.

It localises to the endoplasmic reticulum membrane. The protein localises to the mitochondrion membrane. As part of a SNARE complex may be involved in endoplasmic reticulum membranes fusion and be required for the maintenance of endoplasmic reticulum organization. Also plays a role in apoptosis. It is for instance required for endoplasmic reticulum stress-induced apoptosis. As a substrate of RNF185 interacting with SQSTM1, might also be involved in mitochondrial autophagy. The sequence is that of Vesicle transport protein SEC20 from Rattus norvegicus (Rat).